Here is a 198-residue protein sequence, read N- to C-terminus: Recombination protein RecR (198 aa).

Residues 57-72 (CSICGNLTDDDPCHIC) form a C4-type zinc finger. The Toprim domain occupies 80–175 (EIILVVEDSK…KVTRLARGLA (96 aa)).

This sequence belongs to the RecR family.

May play a role in DNA repair. It seems to be involved in an RecBC-independent recombinational process of DNA repair. It may act with RecF and RecO. The protein is Recombination protein RecR of Streptococcus equi subsp. equi (strain 4047).